The chain runs to 580 residues: Probable RNA-binding protein CG14230 (580 aa).

In terms of domain architecture, RRM spans 4–81; the sequence is TRFFLADLPT…EKLRVSLAKE (78 aa). The segment covering 89 to 100 has biased composition (basic and acidic residues); sequence REREENQRREQG. Disordered regions lie at residues 89–131 and 173–211; these read RERE…EDEE and QHRK…KSAI. The segment covering 110–120 has biased composition (polar residues); the sequence is PSSQLLVQSGQ. Ser231 carries the post-translational modification Phosphoserine. Acidic residues-rich tracts occupy residues 254 to 263 and 298 to 313; these read ENDDDEEEEQ and NEEE…EPEE. Disordered regions lie at residues 254–316, 333–395, and 463–520; these read ENDD…ESER, SAND…SAVS, and PFSY…IPRN. Composition is skewed to basic and acidic residues over residues 348–358 and 365–377; these read LRFDPAKEGHQ and QPKE…EETS. Positions 386-395 are enriched in polar residues; the sequence is AGNSQASAVS. A Phosphoserine modification is found at Ser468. Thr475 bears the Phosphothreonine mark.

The chain is Probable RNA-binding protein CG14230 from Drosophila melanogaster (Fruit fly).